Reading from the N-terminus, the 343-residue chain is N-acetyl-gamma-glutamyl-phosphate reductase (343 aa).

The active site involves Cys149.

The protein belongs to the NAGSA dehydrogenase family. Type 1 subfamily.

The protein resides in the cytoplasm. The enzyme catalyses N-acetyl-L-glutamate 5-semialdehyde + phosphate + NADP(+) = N-acetyl-L-glutamyl 5-phosphate + NADPH + H(+). The protein operates within amino-acid biosynthesis; L-arginine biosynthesis; N(2)-acetyl-L-ornithine from L-glutamate: step 3/4. Catalyzes the NADPH-dependent reduction of N-acetyl-5-glutamyl phosphate to yield N-acetyl-L-glutamate 5-semialdehyde. This is N-acetyl-gamma-glutamyl-phosphate reductase from Exiguobacterium sibiricum (strain DSM 17290 / CCUG 55495 / CIP 109462 / JCM 13490 / 255-15).